The chain runs to 236 residues: Phycocyanobilin:ferredoxin oxidoreductase (236 aa).

It belongs to the HY2 family.

It carries out the reaction (2R,3Z)-phycocyanobilin + 4 oxidized [2Fe-2S]-[ferredoxin] = biliverdin IXalpha + 4 reduced [2Fe-2S]-[ferredoxin] + 4 H(+). Its function is as follows. Catalyzes the four-electron reduction of biliverdin IX-alpha (2-electron reduction at both the A and D rings); the reaction proceeds via an isolatable 2-electron intermediate, 181,182-dihydrobiliverdin. The protein is Phycocyanobilin:ferredoxin oxidoreductase (pcyA) of Thermosynechococcus vestitus (strain NIES-2133 / IAM M-273 / BP-1).